Here is a 270-residue protein sequence, read N- to C-terminus: Elongation factor Ts (270 aa).

The involved in Mg(2+) ion dislocation from EF-Tu stretch occupies residues 76–79 (TDFV).

This sequence belongs to the EF-Ts family.

The protein localises to the cytoplasm. Functionally, associates with the EF-Tu.GDP complex and induces the exchange of GDP to GTP. It remains bound to the aminoacyl-tRNA.EF-Tu.GTP complex up to the GTP hydrolysis stage on the ribosome. In Corynebacterium aurimucosum (strain ATCC 700975 / DSM 44827 / CIP 107346 / CN-1) (Corynebacterium nigricans), this protein is Elongation factor Ts.